A 334-amino-acid chain; its full sequence is GTPase Obg (334 aa).

The 159-residue stretch at 1–159 (MRFVDEVVIK…KEVRLELNLL (159 aa)) folds into the Obg domain. One can recognise an OBG-type G domain in the interval 160-331 (ADVALLGLPN…LAKKLNEFLQ (172 aa)). GTP is bound by residues 166-173 (GLPNAGKS), 191-195 (FTTMY), 212-215 (DIPG), 282-285 (NKID), and 312-314 (SAA). Residues S173 and T193 each coordinate Mg(2+).

It belongs to the TRAFAC class OBG-HflX-like GTPase superfamily. OBG GTPase family. Monomer. The cofactor is Mg(2+).

It localises to the cytoplasm. Its function is as follows. An essential GTPase which binds GTP, GDP and possibly (p)ppGpp with moderate affinity, with high nucleotide exchange rates and a fairly low GTP hydrolysis rate. Plays a role in control of the cell cycle, stress response, ribosome biogenesis and in those bacteria that undergo differentiation, in morphogenesis control. This chain is GTPase Obg, found in Francisella tularensis subsp. holarctica (strain FTNF002-00 / FTA).